The chain runs to 360 residues: DNA replication and repair protein RecF (360 aa).

An ATP-binding site is contributed by 30 to 37; that stretch reads GQNGSGKT.

Belongs to the RecF family.

It localises to the cytoplasm. Its function is as follows. The RecF protein is involved in DNA metabolism; it is required for DNA replication and normal SOS inducibility. RecF binds preferentially to single-stranded, linear DNA. It also seems to bind ATP. The chain is DNA replication and repair protein RecF from Shewanella baltica (strain OS223).